Consider the following 125-residue polypeptide: Small ribosomal subunit protein uS12m (125 aa).

This sequence belongs to the universal ribosomal protein uS12 family. As to quaternary structure, component of the mitochondrial ribosome small subunit.

It localises to the mitochondrion. Protein S12 is involved in the translation initiation step. The protein is Small ribosomal subunit protein uS12m (RPS12) of Arabidopsis thaliana (Mouse-ear cress).